The chain runs to 140 residues: Ig heavy chain V region 93G7 (140 aa).

The N-terminal stretch at M1–S19 is a signal peptide. The 120-residue stretch at E20–S139 folds into the Ig-like domain.

The sequence is that of Ig heavy chain V region 93G7 from Mus musculus (Mouse).